The primary structure comprises 584 residues: Endogenous retrovirus group FC1 Env polyprotein (584 aa).

The N-terminal stretch at 1 to 22 is a signal peptide; it reads MARPSPLCLLLLLTLLTPIVPS. Residues 23–518 are Extracellular-facing; the sequence is NSLLTEPPFR…GWWQSPLTTW (496 aa). N-linked (GlcNAc...) asparagine glycans are attached at residues N69 and N247. The short motif at 251–254 is the CXXC element; sequence CFLC. N272, N276, N308, N313, N322, N334, N342, and N346 each carry an N-linked (GlcNAc...) asparagine glycan. The fusion peptide stretch occupies residues 384 to 404; sequence AVFPPLVIGVSLTSSLVASGL. The CKS-17 signature appears at 449 to 465; sequence MQNRRALDLLTADKGGT. A disulfide bridge links C466 with C473. Residues 466 to 474 carry the CX6CC motif; the sequence is CMFLGEECC. N478 carries an N-linked (GlcNAc...) asparagine glycan. The chain crosses the membrane as a helical span at residues 519–539; that stretch reads IIPFISPILIICLLLLIAPCV. At 540–584 the chain is on the cytoplasmic side; that stretch reads LKFIKNRISEVSRVTVNQMLLHPYSRLPTSEDHYDDALTQQEAAR.

This sequence belongs to the gamma type-C retroviral envelope protein family. HERV class-I F(c)1 env subfamily. In terms of assembly, the surface (SU) and transmembrane (TM) proteins form a heterodimer. SU and TM are attached by noncovalent interactions or by a labile interchain disulfide bond. In terms of processing, specific enzymatic cleavages in vivo yield the mature SU and TM proteins. Post-translationally, the CXXC motif is highly conserved across a broad range of retroviral envelope proteins. It is thought to participate in the formation of a labile disulfide bond possibly with the CX6CC motif present in the transmembrane protein. As to expression, low expression in skin, testis and trachea.

The protein localises to the virion. It is found in the cell membrane. Retroviral envelope proteins mediate receptor recognition and membrane fusion during early infection. Endogenous envelope proteins may have kept, lost or modified their original function during evolution. This endogenous envelope protein has lost its original fusogenic properties. Its function is as follows. SU mediates receptor recognition. In terms of biological role, TM anchors the envelope heterodimer to the viral membrane through one transmembrane domain. The other hydrophobic domain, called fusion peptide, mediates fusion of the viral membrane with the target cell membrane. The chain is Endogenous retrovirus group FC1 Env polyprotein (ERVFC1) from Homo sapiens (Human).